Consider the following 100-residue polypeptide: ATP synthase subunit c (100 aa).

A run of 2 helical transmembrane segments spans residues 27–47 (SVIAGGIGLGLAALGGAIGMG) and 72–92 (FIALAMIEAQVIYALVITLIV).

The protein belongs to the ATPase C chain family. F-type ATPases have 2 components, F(1) - the catalytic core - and F(0) - the membrane proton channel. F(1) has five subunits: alpha(3), beta(3), gamma(1), delta(1), epsilon(1). F(0) has three main subunits: a(1), b(2) and c(10-14). The alpha and beta chains form an alternating ring which encloses part of the gamma chain. F(1) is attached to F(0) by a central stalk formed by the gamma and epsilon chains, while a peripheral stalk is formed by the delta and b chains.

The protein resides in the cell inner membrane. Its function is as follows. F(1)F(0) ATP synthase produces ATP from ADP in the presence of a proton or sodium gradient. F-type ATPases consist of two structural domains, F(1) containing the extramembraneous catalytic core and F(0) containing the membrane proton channel, linked together by a central stalk and a peripheral stalk. During catalysis, ATP synthesis in the catalytic domain of F(1) is coupled via a rotary mechanism of the central stalk subunits to proton translocation. Key component of the F(0) channel; it plays a direct role in translocation across the membrane. A homomeric c-ring of between 10-14 subunits forms the central stalk rotor element with the F(1) delta and epsilon subunits. In Campylobacter concisus (strain 13826), this protein is ATP synthase subunit c.